We begin with the raw amino-acid sequence, 551 residues long: Glucans biosynthesis protein D (551 aa).

A signal peptide (tat-type signal) is located at residues 1–32; that stretch reads MDRRRFIKGSMAMAAVCGTSGIASLFSQAAFA.

This sequence belongs to the OpgD/OpgG family. Predicted to be exported by the Tat system. The position of the signal peptide cleavage has not been experimentally proven.

It is found in the periplasm. The protein operates within glycan metabolism; osmoregulated periplasmic glucan (OPG) biosynthesis. In terms of biological role, probably involved in the control of the structural glucose backbone of osmoregulated periplasmic glucans (OPGs). The protein is Glucans biosynthesis protein D of Escherichia coli O1:K1 / APEC.